The sequence spans 254 residues: Type III pantothenate kinase (254 aa).

Position 6–13 (6–13 (DVGNSNIV)) interacts with ATP. Substrate is bound by residues Y100 and 107–110 (GADR). D109 serves as the catalytic Proton acceptor. D129 lines the K(+) pocket. T132 is an ATP binding site. A substrate-binding site is contributed by T184.

The protein belongs to the type III pantothenate kinase family. As to quaternary structure, homodimer. The cofactor is NH4(+). K(+) is required as a cofactor.

Its subcellular location is the cytoplasm. It catalyses the reaction (R)-pantothenate + ATP = (R)-4'-phosphopantothenate + ADP + H(+). It functions in the pathway cofactor biosynthesis; coenzyme A biosynthesis; CoA from (R)-pantothenate: step 1/5. Functionally, catalyzes the phosphorylation of pantothenate (Pan), the first step in CoA biosynthesis. In Geobacter sp. (strain M21), this protein is Type III pantothenate kinase.